We begin with the raw amino-acid sequence, 623 residues long: Membralin-like protein At1g60995 (623 aa).

A helical transmembrane segment spans residues 24–44; sequence GFLEYTYLFVAITLFCILVVM. The tract at residues 99–119 is disordered; it reads SLEVSKTDQESSTSEENTDDT. A run of 4 helical transmembrane segments spans residues 315-335, 363-383, 392-412, and 424-444; these read GVLMMSLFVFFTTTMSVSFTL, IFVHVIESLVFVPIMIGILFF, LLAFMVLVLVWLCELFTLISV, and FFLLYFLVFHIYFFSYAYGFS. Disordered stretches follow at residues 506–567 and 602–623; these read NRTT…QAGA and EAQVFADTSPPQNPHHDPLSVD. A compositionally biased stretch (polar residues) spans 514-531; it reads PSGPNHTTPNQNTETRSF.

It belongs to the membralin family.

It localises to the membrane. The polypeptide is Membralin-like protein At1g60995 (Arabidopsis thaliana (Mouse-ear cress)).